Consider the following 1450-residue polypeptide: Fanconi anemia group D2 protein homolog (1450 aa).

The tract at residues 1-37 (MISKRRRLDSEDKENLTEDASKTMPLSKLAKKSHNSH) is disordered. Residues 1–289 (MISKRRRLDS…VKFLLHSVTD (289 aa)) are interaction with FANCE. Residues 8-21 (LDSEDKENLTEDAS) are compositionally biased toward basic and acidic residues. The residue at position 220 (S220) is a Phosphoserine. Residues 246–357 (VFSSLRLDPN…IKSAIRYEKT (112 aa)) form an interaction with BRCA2 region. K559 is covalently cross-linked (Glycyl lysine isopeptide (Lys-Gly) (interchain with G-Cter in ubiquitin)). Phosphoserine is present on S714. A disordered region spans residues 853-879 (SAVAAKNRNKGKTGGKKQKADSNKASC). Basic residues predominate over residues 859–869 (NRNKGKTGGKK). A phosphoserine mark is found at S1255, S1404, and S1412. Residues 1398–1450 (ISQDPSSSESNAEDSEDGVTSHVSRNRATEDGEDEASDEQKDQDSDESDDSSS) form a disordered region. T1426 is subject to Phosphothreonine. S1434 carries the phosphoserine modification. A compositionally biased stretch (acidic residues) spans 1441–1450 (DSDESDDSSS).

It belongs to the Fanconi anemia protein FANCD2 family. As to quaternary structure, homodimer; cannot be ubiquitinated and does not bind DNA. Part of a FANCI-FANCD2 heterodimeric complex that binds and scans dsDNA for DNA damage. Interacts directly with FANCE and FANCI. Interacts with USP1 and MEN1. The ubiquitinated form specifically interacts with BRCA1 and BLM. Both the nonubiquitinated and the monoubiquitinated forms interact with BRCA2; this interaction is mediated by phosphorylated FANCG and the complex also includes XCCR3. The ubiquitinated form specifically interacts with MTMR15/FAN1 (via UBZ-type zinc finger), leading to recruit MTMR15/FAN1 to sites of DNA damage. Interacts with DCLRE1B/Apollo. Interacts with POLN. Interacts with UHRF1 and UHRF2; these interactions promote FANCD2 activation. Post-translationally, monoubiquitinated on Lys-559 during S phase and upon genotoxic stress by FANCL in complex with E2 ligases UBE2T or UBE2W. Deubiquitinated by USP1 as cells enter G2/M, or once DNA repair is completed. Monoubiquitination requires the joint intervention of the FANC core complex, including FANCA, FANCB, FANCC, FANCE, FANCF, FANCG, and FANCM, and proteins involved in cell cycle checkpoints and DNA repair, including RPA1, ATR, CHEK1 and BRCA1, and is mediated by FANCL/PHF9. Monoubiquitination prevents DNA release from the FANCI-FANCD2 complex. FANCD2 is only ubiquitinated in the FANCI-FANCD2 complex and the monoubiquitination of FANCD2 is promoted by phosphorylation of FANCI. Ubiquitination is required for binding to chromatin, interaction with BRCA1, BRCA2 and MTMR15/FAN1, DNA repair, and normal cell cycle progression. In terms of processing, phosphorylated on several sites including Ser-220 and Ser-1399 in response to genotoxic stress by ATM and/or ATR.

The protein localises to the nucleus. In terms of biological role, required for maintenance of chromosomal stability. Promotes accurate and efficient pairing of homologs during meiosis. Involved in the repair of DNA double-strand breaks, both by homologous recombination and single-strand annealing. The FANCI-FANCD2 complex binds and scans double-stranded DNA (dsDNA) for DNA damage; this complex stalls at DNA junctions between double-stranded DNA and single-stranded DNA. May participate in S phase and G2 phase checkpoint activation upon DNA damage. Plays a role in preventing breakage and loss of missegregating chromatin at the end of cell division, particularly after replication stress. Promotes BRCA2/FANCD1 loading onto damaged chromatin. May also be involved in B-cell immunoglobulin isotype switching. The chain is Fanconi anemia group D2 protein homolog (Fancd2) from Mus musculus (Mouse).